Here is a 110-residue protein sequence, read N- to C-terminus: uncharacterized protein (110 aa).

Transmembrane regions (helical) follow at residues 6–26 and 38–58; these read VSLYILCFALGLRNTFLIYNV and TSGPIGDTIFLIYGIIIIIGP.

It is found in the membrane. This is an uncharacterized protein from Saccharomyces cerevisiae (strain ATCC 204508 / S288c) (Baker's yeast).